Reading from the N-terminus, the 155-residue chain is Small ribosomal subunit protein uS7 (155 aa).

It belongs to the universal ribosomal protein uS7 family. Part of the 30S ribosomal subunit. Contacts proteins S9 and S11.

Its function is as follows. One of the primary rRNA binding proteins, it binds directly to 16S rRNA where it nucleates assembly of the head domain of the 30S subunit. Is located at the subunit interface close to the decoding center, probably blocks exit of the E-site tRNA. This Nautilia profundicola (strain ATCC BAA-1463 / DSM 18972 / AmH) protein is Small ribosomal subunit protein uS7.